The sequence spans 287 residues: Probable 18S rRNA (guanine-N(7))-methyltransferase (287 aa).

The disordered stretch occupies residues 214–287; sequence GVEGEEYEQQ…FSGRKRGPKF (74 aa). Over residues 217–228 the composition is skewed to acidic residues; the sequence is GEEYEQQEEEDS. Basic residues predominate over residues 234–245; the sequence is SNRKRDRRRVTK. A compositionally biased stretch (basic and acidic residues) spans 253 to 278; that stretch reads KTKEWIMNKKDRQRKQGREIKNDSKF.

Belongs to the class I-like SAM-binding methyltransferase superfamily. BUD23/WBSCR22 family.

It localises to the nucleus. The protein resides in the nucleoplasm. The protein localises to the cytoplasm. Its subcellular location is the perinuclear region. The catalysed reaction is a guanosine in 18S rRNA + S-adenosyl-L-methionine = an N(7)-methylguanosine in 18S rRNA + S-adenosyl-L-homocysteine. Its function is as follows. S-adenosyl-L-methionine-dependent methyltransferase that specifically methylates the N(7) position of a guanine in 18S rRNA. Important for biogenesis end export of the 40S ribosomal subunit independent on its methyltransferase activity. In terms of biological role, S-adenosyl-L-methionine-dependent methyltransferase that specifically methylates the N(7) position of a guanine in 18S rRNA. Requires the methyltransferase adapter protein TRM112 for full rRNA methyltransferase activity. Involved in the pre-rRNA processing steps leading to small-subunit rRNA production independently of its RNA-modifying catalytic activity. Important for biogenesis end export of the 40S ribosomal subunit independent on its methyltransferase activity. This chain is Probable 18S rRNA (guanine-N(7))-methyltransferase, found in Dictyostelium discoideum (Social amoeba).